Here is a 61-residue protein sequence, read N- to C-terminus: Photosystem II reaction center protein K (61 aa).

A propeptide spanning residues 1–24 is cleaved from the precursor; it reads MPNILSLTCICFNSVIYPTSFFFA. Residues 32 to 52 form a helical membrane-spanning segment; sequence IFNPIVDFMPVIPLFFFLLAF.

This sequence belongs to the PsbK family. In terms of assembly, PSII is composed of 1 copy each of membrane proteins PsbA, PsbB, PsbC, PsbD, PsbE, PsbF, PsbH, PsbI, PsbJ, PsbK, PsbL, PsbM, PsbT, PsbX, PsbY, PsbZ, Psb30/Ycf12, at least 3 peripheral proteins of the oxygen-evolving complex and a large number of cofactors. It forms dimeric complexes.

It is found in the plastid. The protein resides in the chloroplast thylakoid membrane. Functionally, one of the components of the core complex of photosystem II (PSII). PSII is a light-driven water:plastoquinone oxidoreductase that uses light energy to abstract electrons from H(2)O, generating O(2) and a proton gradient subsequently used for ATP formation. It consists of a core antenna complex that captures photons, and an electron transfer chain that converts photonic excitation into a charge separation. The protein is Photosystem II reaction center protein K of Triticum aestivum (Wheat).